A 338-amino-acid polypeptide reads, in one-letter code: Mitochondrial amidoxime reducing component 2 (338 aa).

Residues 1–35 (MGSSSSTALARLGLPGQPRSTWLGVAALGLAAVAL) constitute a mitochondrion transit peptide. Glycyl lysine isopeptide (Lys-Gly) (interchain with G-Cter in ubiquitin) cross-links involve residues Lys-59, Lys-138, and Lys-144. Lys-156 carries the N6-acetyllysine; alternate modification. Lys-156 participates in a covalent cross-link: Glycyl lysine isopeptide (Lys-Gly) (interchain with G-Cter in ubiquitin); alternate. Glycyl lysine isopeptide (Lys-Gly) (interchain with G-Cter in ubiquitin) cross-links involve residues Lys-173, Lys-187, Lys-289, and Lys-296. The MOSC domain maps to 188–336 (GRTTKKLYPS…LRVGDPVYRM (149 aa)).

As to quaternary structure, component of a complex composed of cytochrome b5, NADH-cytochrome b5 reductase (CYB5R3) and MTARC2. The cofactor is Mo-molybdopterin. In terms of processing, ubiquitinated by PRKN during mitophagy, leading to its degradation and enhancement of mitophagy. Deubiquitinated by USP30.

It localises to the mitochondrion outer membrane. The protein resides in the peroxisome. It catalyses the reaction N(omega)-hydroxy-L-arginine + 2 Fe(II)-[cytochrome b5] + 2 H(+) = L-arginine + 2 Fe(III)-[cytochrome b5] + H2O. Catalyzes the reduction of N-oxygenated molecules, acting as a counterpart of cytochrome P450 and flavin-containing monooxygenases in metabolic cycles. As a component of prodrug-converting system, reduces a multitude of N-hydroxylated prodrugs particularly amidoximes, leading to increased drug bioavailability. May be involved in mitochondrial N(omega)-hydroxy-L-arginine (NOHA) reduction, regulating endogenous nitric oxide levels and biosynthesis. Postulated to cleave the N-OH bond of N-hydroxylated substrates in concert with electron transfer from NADH to cytochrome b5 reductase then to cytochrome b5, the ultimate electron donor that primes the active site for substrate reduction. This chain is Mitochondrial amidoxime reducing component 2 (Mtarc2), found in Rattus norvegicus (Rat).